The chain runs to 1377 residues: DNA-directed RNA polymerase subunit beta (1377 aa).

It belongs to the RNA polymerase beta chain family. The RNAP catalytic core consists of 2 alpha, 1 beta, 1 beta' and 1 omega subunit. When a sigma factor is associated with the core the holoenzyme is formed, which can initiate transcription.

The catalysed reaction is RNA(n) + a ribonucleoside 5'-triphosphate = RNA(n+1) + diphosphate. DNA-dependent RNA polymerase catalyzes the transcription of DNA into RNA using the four ribonucleoside triphosphates as substrates. The protein is DNA-directed RNA polymerase subunit beta of Azoarcus sp. (strain BH72).